We begin with the raw amino-acid sequence, 231 residues long: 7-cyano-7-deazaguanine synthase (231 aa).

Leucine 11–alanine 21 contributes to the ATP binding site. Zn(2+) contacts are provided by cysteine 197, cysteine 205, cysteine 208, and cysteine 211.

The protein belongs to the QueC family. Requires Zn(2+) as cofactor.

The catalysed reaction is 7-carboxy-7-deazaguanine + NH4(+) + ATP = 7-cyano-7-deazaguanine + ADP + phosphate + H2O + H(+). Its pathway is purine metabolism; 7-cyano-7-deazaguanine biosynthesis. Its function is as follows. Catalyzes the ATP-dependent conversion of 7-carboxy-7-deazaguanine (CDG) to 7-cyano-7-deazaguanine (preQ(0)). The sequence is that of 7-cyano-7-deazaguanine synthase from Bdellovibrio bacteriovorus (strain ATCC 15356 / DSM 50701 / NCIMB 9529 / HD100).